Here is an 88-residue protein sequence, read N- to C-terminus: Small ribosomal subunit protein uS17 (88 aa).

The protein belongs to the universal ribosomal protein uS17 family. Part of the 30S ribosomal subunit.

In terms of biological role, one of the primary rRNA binding proteins, it binds specifically to the 5'-end of 16S ribosomal RNA. This is Small ribosomal subunit protein uS17 from Prochlorococcus marinus (strain MIT 9303).